A 281-amino-acid polypeptide reads, in one-letter code: Diaminopimelate epimerase (281 aa).

Substrate is bound by residues asparagine 11 and asparagine 65. Residue cysteine 74 is the Proton donor of the active site. Residues 75–76 (GN), asparagine 164, asparagine 197, and 215–216 (ER) each bind substrate. The active-site Proton acceptor is the cysteine 224. Residue 225 to 226 (GT) coordinates substrate.

Belongs to the diaminopimelate epimerase family. Homodimer.

Its subcellular location is the cytoplasm. It catalyses the reaction (2S,6S)-2,6-diaminopimelate = meso-2,6-diaminopimelate. Its pathway is amino-acid biosynthesis; L-lysine biosynthesis via DAP pathway; DL-2,6-diaminopimelate from LL-2,6-diaminopimelate: step 1/1. Functionally, catalyzes the stereoinversion of LL-2,6-diaminopimelate (L,L-DAP) to meso-diaminopimelate (meso-DAP), a precursor of L-lysine and an essential component of the bacterial peptidoglycan. The chain is Diaminopimelate epimerase from Heliobacterium modesticaldum (strain ATCC 51547 / Ice1).